Here is a 172-residue protein sequence, read N- to C-terminus: 3-hydroxydecanoyl-[acyl-carrier-protein] dehydratase (172 aa).

The active site involves His71.

This sequence belongs to the thioester dehydratase family. FabA subfamily. In terms of assembly, homodimer.

It localises to the cytoplasm. It catalyses the reaction a (3R)-hydroxyacyl-[ACP] = a (2E)-enoyl-[ACP] + H2O. It carries out the reaction (3R)-hydroxydecanoyl-[ACP] = (2E)-decenoyl-[ACP] + H2O. The catalysed reaction is (2E)-decenoyl-[ACP] = (3Z)-decenoyl-[ACP]. It participates in lipid metabolism; fatty acid biosynthesis. In terms of biological role, necessary for the introduction of cis unsaturation into fatty acids. Catalyzes the dehydration of (3R)-3-hydroxydecanoyl-ACP to E-(2)-decenoyl-ACP and then its isomerization to Z-(3)-decenoyl-ACP. Can catalyze the dehydratase reaction for beta-hydroxyacyl-ACPs with saturated chain lengths up to 16:0, being most active on intermediate chain length. In Edwardsiella ictaluri (strain 93-146), this protein is 3-hydroxydecanoyl-[acyl-carrier-protein] dehydratase.